Consider the following 321-residue polypeptide: Ferredoxin--NADP reductase (321 aa).

FAD-binding residues include glutamate 33, glutamine 41, tyrosine 46, valine 86, leucine 119, aspartate 277, and serine 318.

This sequence belongs to the ferredoxin--NADP reductase type 2 family. As to quaternary structure, homodimer. It depends on FAD as a cofactor.

The enzyme catalyses 2 reduced [2Fe-2S]-[ferredoxin] + NADP(+) + H(+) = 2 oxidized [2Fe-2S]-[ferredoxin] + NADPH. The chain is Ferredoxin--NADP reductase from Lactococcus lactis subsp. cremoris (strain SK11).